Here is a 287-residue protein sequence, read N- to C-terminus: 4-hydroxybenzoate octaprenyltransferase (287 aa).

6 helical membrane-spanning segments follow: residues 41–61, 92–112, 133–153, 160–180, 218–238, and 267–287; these read LPLLVIFTVGTVLMRSAGCAI, VALAAALSLLAFLLILPLNAL, FFAIPQAYLGIAFGFGIPMAF, VPMLAWVMLLANVFWSVAYDT, LGIYVGIGVLLGFGALYWLGW, and NNWLGGALFAGIAAHYAATWF.

This sequence belongs to the UbiA prenyltransferase family. The cofactor is Mg(2+).

The protein localises to the cell inner membrane. It carries out the reaction all-trans-octaprenyl diphosphate + 4-hydroxybenzoate = 4-hydroxy-3-(all-trans-octaprenyl)benzoate + diphosphate. Its pathway is cofactor biosynthesis; ubiquinone biosynthesis. In terms of biological role, catalyzes the prenylation of para-hydroxybenzoate (PHB) with an all-trans polyprenyl group. Mediates the second step in the final reaction sequence of ubiquinone-8 (UQ-8) biosynthesis, which is the condensation of the polyisoprenoid side chain with PHB, generating the first membrane-bound Q intermediate 3-octaprenyl-4-hydroxybenzoate. The chain is 4-hydroxybenzoate octaprenyltransferase from Paraburkholderia xenovorans (strain LB400).